The chain runs to 524 residues: Putative UDP-glucuronosyltransferase ugt-56 (524 aa).

The first 20 residues, 1 to 20, serve as a signal peptide directing secretion; sequence MLWAFIVWLGALCIYGSAFD. N-linked (GlcNAc...) asparagine glycosylation is found at Asn125, Asn277, and Asn335. The helical transmembrane segment at 488–508 threads the bilayer; the sequence is LIDSSIALVFMLFIFVFVNHF.

The protein belongs to the UDP-glycosyltransferase family.

The protein localises to the membrane. It catalyses the reaction glucuronate acceptor + UDP-alpha-D-glucuronate = acceptor beta-D-glucuronoside + UDP + H(+). This Caenorhabditis elegans protein is Putative UDP-glucuronosyltransferase ugt-56 (ugt-56).